The sequence spans 368 residues: WAT1-related protein At5g40240 (368 aa).

10 helical membrane-spanning segments follow: residues 18–38 (VVPFAAMFAVECATVGSNTLF), 50–70 (VFVFYSYIVSTLLLLPLSVIF), 82–102 (PLFFKIFLLGLVGFMSQIAGC), 111–131 (TLASAISNLTPAFTFTLAVIF), 142–162 (ATQAKIIGAILSISGALVVVL), 194–214 (WIIGGLLLASQYFLISVWYIL), 226–246 (ITVVFFYNLFATLISVPVCLF), 260–280 (ISLAAIIYSGVFVSLFSALTH), 292–312 (ISLFRPLSIAIAVAMGAIFLG), and 315–335 (LHLGSVIGSMILCIGFYTVIW). EamA domains are found at residues 33–161 (GSNT…LVVV) and 208–334 (ISVW…YTVI).

The protein belongs to the drug/metabolite transporter (DMT) superfamily. Plant drug/metabolite exporter (P-DME) (TC 2.A.7.4) family.

The protein localises to the membrane. This Arabidopsis thaliana (Mouse-ear cress) protein is WAT1-related protein At5g40240.